Consider the following 1255-residue polypeptide: Cilia- and flagella-associated protein 337 B (1255 aa).

Residues 87–122 (KLVRCLTNLFEEIDLNGNGILEWDEFTNYVIEKATV) enclose the EF-hand domain. Residues aspartate 100, asparagine 102, asparagine 104, and glutamate 111 each contribute to the Ca(2+) site. WD repeat units follow at residues 228–269 (DLKT…WVLA), 282–322 (EFKN…KELE), 326–365 (AHTEVIMDMITMPKLQFLASGALDGLLILWDTINNKKKRV), 368–407 (EHTRGITSLSFNEALILLFSAGFDHEVCVWNPYIDNLIYK), 410–449 (GHSSPLLGVKVIEGTSQVITLDSDGNVRVTDIKKFSNVQC), 496–536 (VDDY…KIFS), 538–577 (VTQGEITCFTLDSLKKRMLIGDSMGQIGIYNTYNGAMIKA), 580–624 (KHSA…RTLE), 625–664 (LKDVMITSLGFDPITKMIIVATNTGITSFYESDTGKQNGS), 669–708 (TQYEEITSLNLIKNLPYIITTTTNGKINFIALPPLLFKFQ), 769–808 (QQNLSISNCIYCDQTKCLFLSDDKGFIKCFDISQILTILE), and 844–883 (AHYEMIKSLEYIQEENLLITTAYDKKVKLWDSKTGNLIDQ). 2 disordered regions span residues 941-988 (IKSL…NFNP) and 1140-1160 (QQQVQNQQTEPSSNRSHQQPG). The segment covering 953 to 969 (TQESSTQEQEAAQQPQQ) has biased composition (low complexity). Residues 1148-1160 (TEPSSNRSHQQPG) are compositionally biased toward polar residues.

It belongs to the CFAP337 family. In terms of assembly, associates with components of the nexin-dynein regulatory complex (N-DRC) and the CFAP184:CFAP263 complex.

The protein resides in the cell projection. It localises to the cilium. In terms of biological role, associates with components of the nexin-dynein regulatory complex (N-DRC), a key regulator of ciliary/flagellar motility, and might act as an inner dynein arm (IDA) hub or linkage. This Tetrahymena thermophila (strain SB210) protein is Cilia- and flagella-associated protein 337 B.